The chain runs to 1526 residues: Ig-like and fibronectin type-III domain-containing protein 2 (1526 aa).

Positions 1–19 (MMRWRLAVLFLTLLASTTG) are cleaved as a signal peptide. The segment at 20–39 (DDTTTKASVSTTTKKGTDGP) is disordered. Over 20 to 1415 (DDTTTKASVS…RRSASKGSSS (1396 aa)) the chain is Extracellular. The span at 24–33 (TKASVSTTTK) shows a compositional bias: low complexity. The Ig-like C2-type 1 domain maps to 39–170 (PHLTTDDEGF…ELLEFQVEVL (132 aa)). The cysteines at positions 61 and 154 are disulfide-linked. Residues Asn87, Asn143, Asn158, Asn181, Asn414, Asn427, Asn475, Asn489, Asn533, Asn590, Asn617, and Asn662 are each glycosylated (N-linked (GlcNAc...) asparagine). Residues 379–470 (APRGKRDVDF…VRNIASTNVH (92 aa)) form the Fibronectin type-III 1 domain. The Fibronectin type-III 2 domain occupies 587–678 (APGNVTISEL…TAKLFSTLPT (92 aa)). The WR1 domain maps to 682–724 (PLCTIGEPIYMNDGRVMICDAVNPCPNGFRCTGAGSDLSYCCP). Asn754, Asn871, Asn906, Asn939, Asn979, Asn1004, and Asn1049 each carry an N-linked (GlcNAc...) asparagine glycan. Fibronectin type-III domains are found at residues 827 to 914 (AVRN…TKPA) and 924 to 1020 (APEK…AQKD). Residues 1116-1207 (ASVTMKKDKI…SRVEASSEVI (92 aa)) enclose the Ig-like C2-type 2 domain. An intrachain disulfide couples Cys1137 to Cys1190. N-linked (GlcNAc...) asparagine glycosylation is present at Asn1250. In terms of domain architecture, Fibronectin type-III 5 spans 1314 to 1406 (APSEVSNVRI…SAIPKDSEPR (93 aa)). The chain crosses the membrane as a helical span at residues 1416 to 1436 (AFWIVVILVVFGVLIAGLAVL). Residues 1437 to 1526 (SKRRELPYPI…NGMRYAKLET (90 aa)) are Cytoplasmic-facing. Residues 1485 to 1518 (SATTGTAAATQSEWQSANLEANSTTDNSHEYRNG) form a disordered region. The segment covering 1495-1510 (QSEWQSANLEANSTTD) has biased composition (polar residues).

It is found in the cell membrane. In Caenorhabditis elegans, this protein is Ig-like and fibronectin type-III domain-containing protein 2.